A 627-amino-acid polypeptide reads, in one-letter code: Carene synthase, chloroplastic (627 aa).

A chloroplast-targeting transit peptide spans 1–36 (MSVISIMPLASKPCLNKSFISSTHEPKALRRPISTV). Residues D378, D382, and D530 each coordinate Mg(2+). A DDXXD motif motif is present at residues 378-382 (DDMYD).

The protein belongs to the terpene synthase family. Tpsd subfamily. Mg(2+) serves as cofactor. Requires Mn(2+) as cofactor.

Its subcellular location is the plastid. It localises to the chloroplast. The catalysed reaction is (2E)-geranyl diphosphate = (+)-car-3-ene + diphosphate. It functions in the pathway terpene metabolism; oleoresin biosynthesis. Its function is as follows. Terpene synthase (TPS) involved in defensive oleoresin formation in conifers in response to insect attack or other injury. The protein is Carene synthase, chloroplastic (3CAR) of Picea glauca (White spruce).